Here is a 456-residue protein sequence, read N- to C-terminus: Argininosuccinate lyase (456 aa).

It belongs to the lyase 1 family. Argininosuccinate lyase subfamily.

Its subcellular location is the cytoplasm. The enzyme catalyses 2-(N(omega)-L-arginino)succinate = fumarate + L-arginine. The protein operates within amino-acid biosynthesis; L-arginine biosynthesis; L-arginine from L-ornithine and carbamoyl phosphate: step 3/3. This chain is Argininosuccinate lyase, found in Listeria monocytogenes serovar 1/2a (strain ATCC BAA-679 / EGD-e).